The primary structure comprises 342 residues: Ketol-acid reductoisomerase (NADP(+)) (342 aa).

Positions 2 to 181 (VKVYYNGDIK…GGARAGVLET (180 aa)) constitute a KARI N-terminal Rossmann domain. NADP(+) contacts are provided by residues 25–28 (YGSQ), arginine 48, serine 52, and 82–85 (DEQQ). Residue histidine 107 is part of the active site. Glycine 133 is an NADP(+) binding site. One can recognise a KARI C-terminal knotted domain in the interval 182–327 (TFKEETETDL…RKLREMMPFV (146 aa)). Residues aspartate 190, glutamate 194, glutamate 226, and glutamate 230 each contribute to the Mg(2+) site. Serine 251 serves as a coordination point for substrate.

This sequence belongs to the ketol-acid reductoisomerase family. Mg(2+) is required as a cofactor.

It carries out the reaction (2R)-2,3-dihydroxy-3-methylbutanoate + NADP(+) = (2S)-2-acetolactate + NADPH + H(+). The enzyme catalyses (2R,3R)-2,3-dihydroxy-3-methylpentanoate + NADP(+) = (S)-2-ethyl-2-hydroxy-3-oxobutanoate + NADPH + H(+). It participates in amino-acid biosynthesis; L-isoleucine biosynthesis; L-isoleucine from 2-oxobutanoate: step 2/4. The protein operates within amino-acid biosynthesis; L-valine biosynthesis; L-valine from pyruvate: step 2/4. In terms of biological role, involved in the biosynthesis of branched-chain amino acids (BCAA). Catalyzes an alkyl-migration followed by a ketol-acid reduction of (S)-2-acetolactate (S2AL) to yield (R)-2,3-dihydroxy-isovalerate. In the isomerase reaction, S2AL is rearranged via a Mg-dependent methyl migration to produce 3-hydroxy-3-methyl-2-ketobutyrate (HMKB). In the reductase reaction, this 2-ketoacid undergoes a metal-dependent reduction by NADPH to yield (R)-2,3-dihydroxy-isovalerate. In Bacillus licheniformis (strain ATCC 14580 / DSM 13 / JCM 2505 / CCUG 7422 / NBRC 12200 / NCIMB 9375 / NCTC 10341 / NRRL NRS-1264 / Gibson 46), this protein is Ketol-acid reductoisomerase (NADP(+)).